The chain runs to 331 residues: Histone-lysine N-methyltransferase, H3 lysine-9 specific dim-5 (331 aa).

Residues 77–159 form the Pre-SET domain; sequence VGCSCASDEE…DCPNRVVERG (83 aa). 9 residues coordinate Zn(2+): cysteine 79, cysteine 81, cysteine 87, cysteine 92, cysteine 94, cysteine 141, cysteine 145, cysteine 147, and cysteine 151. The region spanning 162 to 297 is the SET domain; sequence VPLQIFRTKD…KGTELTFDYV (136 aa). S-adenosyl-L-methionine contacts are provided by residues 172–174, aspartate 215, tyrosine 217, arginine 251, and 254–255; these read RGW and NH. 4 residues coordinate Zn(2+): cysteine 257, cysteine 319, cysteine 321, and cysteine 326. The region spanning 315–331 is the Post-SET domain; sequence EMTKCLCGTAKCRGYLW.

It belongs to the class V-like SAM-binding methyltransferase superfamily. Histone-lysine methyltransferase family. Suvar3-9 subfamily.

Its subcellular location is the nucleus. The protein resides in the chromosome. It catalyses the reaction L-lysyl(9)-[histone H3] + 3 S-adenosyl-L-methionine = N(6),N(6),N(6)-trimethyl-L-lysyl(9)-[histone H3] + 3 S-adenosyl-L-homocysteine + 3 H(+). In terms of biological role, histone methyltransferase that specifically trimethylates histone H3 to form H3K9me3. H3K9me3 marks chromatin regions for DNA methylation. Dim-5 recognizes Arg-8 to Gly-12 of the H3 tail with Thr-11 and Gly-12 being the most important specificity determinants, the recognition of whcih is important to distinguish H3K9 from H3K27 and H4K20. The protein is Histone-lysine N-methyltransferase, H3 lysine-9 specific dim-5 (dim-5) of Neurospora crassa (strain ATCC 24698 / 74-OR23-1A / CBS 708.71 / DSM 1257 / FGSC 987).